Here is a 150-residue protein sequence, read N- to C-terminus: MKQPSVNIKNKRATFDYELMDTYTAGIVLTGTEIKSIRLGKASLVDTFCYFAKGELWVKNMHIAEYFYGSYNNHTARRDRKLLLNKKELEKIQRGMKDPGFTTVPVRLFINEKGLAKLVVALAKGKKQYDKRESIKEKDDRRDMARMFKR.

This sequence belongs to the SmpB family.

It localises to the cytoplasm. Required for rescue of stalled ribosomes mediated by trans-translation. Binds to transfer-messenger RNA (tmRNA), required for stable association of tmRNA with ribosomes. tmRNA and SmpB together mimic tRNA shape, replacing the anticodon stem-loop with SmpB. tmRNA is encoded by the ssrA gene; the 2 termini fold to resemble tRNA(Ala) and it encodes a 'tag peptide', a short internal open reading frame. During trans-translation Ala-aminoacylated tmRNA acts like a tRNA, entering the A-site of stalled ribosomes, displacing the stalled mRNA. The ribosome then switches to translate the ORF on the tmRNA; the nascent peptide is terminated with the 'tag peptide' encoded by the tmRNA and targeted for degradation. The ribosome is freed to recommence translation, which seems to be the essential function of trans-translation. This chain is SsrA-binding protein, found in Bacteroides thetaiotaomicron (strain ATCC 29148 / DSM 2079 / JCM 5827 / CCUG 10774 / NCTC 10582 / VPI-5482 / E50).